Here is a 221-residue protein sequence, read N- to C-terminus: MGQKVHPHGLRVGVIKGWDAKWYANKKDFADNLVEDNQIRKFVKKELFSAGISKIEIERAAKRVKLNIYTAKPGVVIGKGGSGIESLKKKLTNYISGKNILINIVEVKSVEAEAQLMAENIAAQLEKRISFRRAMKQTMQRAMRHGIKGVKTACSGRLGGAEIARTEHYHEGTIPLQTLRADIDYGFAEANTTYGKIGVKVWVYKGEVLPTKKVEKEEANA.

The 70-residue stretch at 39-108 (IRKFVKKELF…NILINIVEVK (70 aa)) folds into the KH type-2 domain.

Belongs to the universal ribosomal protein uS3 family. As to quaternary structure, part of the 30S ribosomal subunit. Forms a tight complex with proteins S10 and S14.

Its function is as follows. Binds the lower part of the 30S subunit head. Binds mRNA in the 70S ribosome, positioning it for translation. This chain is Small ribosomal subunit protein uS3, found in Clostridium botulinum (strain Alaska E43 / Type E3).